Reading from the N-terminus, the 457-residue chain is RuvB-like helicase 1 (457 aa).

73-80 (GGPSTGKT) contributes to the ATP binding site.

Belongs to the RuvB family. May form heterododecamers with RVB2. Component of the SWR1 chromatin remodeling complex, the INO80 chromatin remodeling complex, and of the R2TP complex.

The protein localises to the nucleus. The catalysed reaction is ATP + H2O = ADP + phosphate + H(+). In terms of biological role, DNA helicase which participates in several chromatin remodeling complexes, including the SWR1 and the INO80 complexes. The SWR1 complex mediates the ATP-dependent exchange of histone H2A for the H2A variant HZT1 leading to transcriptional regulation of selected genes by chromatin remodeling. The INO80 complex remodels chromatin by shifting nucleosomes and is involved in DNA repair. Also involved in pre-rRNA processing. The sequence is that of RuvB-like helicase 1 (RVB1) from Candida glabrata (strain ATCC 2001 / BCRC 20586 / JCM 3761 / NBRC 0622 / NRRL Y-65 / CBS 138) (Yeast).